The sequence spans 486 residues: Homoserine O-acetyltransferase (486 aa).

One can recognise an AB hydrolase-1 domain in the interval 66–436; the sequence is NVLVICHALT…PEGHDAFLLE (371 aa). Ser-162 (nucleophile) is an active-site residue. The disordered stretch occupies residues 248–281; it reads KFSRRSPSIAQQQKAQREETRKPSTVSEHSLQIH. Composition is skewed to polar residues over residues 250–261 and 270–280; these read SRRSPSIAQQQK and PSTVSEHSLQI. Catalysis depends on residues Asp-401 and His-430.

Belongs to the AB hydrolase superfamily. MetX family.

The protein resides in the cytoplasm. The enzyme catalyses L-homoserine + acetyl-CoA = O-acetyl-L-homoserine + CoA. The protein operates within amino-acid biosynthesis; L-methionine biosynthesis via de novo pathway; O-acetyl-L-homoserine from L-homoserine: step 1/1. Commits homoserine to the methionine biosynthesis pathway by catalyzing its O-acetylation. This Saccharomyces cerevisiae (strain ATCC 204508 / S288c) (Baker's yeast) protein is Homoserine O-acetyltransferase (MET2).